Reading from the N-terminus, the 214-residue chain is ATP phosphoribosyltransferase (214 aa).

Belongs to the ATP phosphoribosyltransferase family. Short subfamily. In terms of assembly, heteromultimer composed of HisG and HisZ subunits.

Its subcellular location is the cytoplasm. The enzyme catalyses 1-(5-phospho-beta-D-ribosyl)-ATP + diphosphate = 5-phospho-alpha-D-ribose 1-diphosphate + ATP. It participates in amino-acid biosynthesis; L-histidine biosynthesis; L-histidine from 5-phospho-alpha-D-ribose 1-diphosphate: step 1/9. In terms of biological role, catalyzes the condensation of ATP and 5-phosphoribose 1-diphosphate to form N'-(5'-phosphoribosyl)-ATP (PR-ATP). Has a crucial role in the pathway because the rate of histidine biosynthesis seems to be controlled primarily by regulation of HisG enzymatic activity. The polypeptide is ATP phosphoribosyltransferase (hisG) (Nostoc sp. (strain PCC 7120 / SAG 25.82 / UTEX 2576)).